Reading from the N-terminus, the 374-residue chain is Speckle-type POZ protein (374 aa).

Residues 31-161 (KFSYMWTINN…DDKLTLFCEV (131 aa)) enclose the MATH domain. Residues 71-191 (VNPKGLDEES…PDCRLADELG (121 aa)) are required for nuclear localization. The 125-residue stretch at 173–297 (QNTMNMVKVP…MCEDALCTSL (125 aa)) folds into the BTB domain. Residues 297-355 (LSVENAAEILILADLHSADQLKTQAVDFINYHASDVMETSGWKSMVASHPHLVAEAYRS) form a homodimerization region.

The protein belongs to the Tdpoz family. As to quaternary structure, homodimer. Part of cullin-RING-based BCR (BTB-CUL3-RBX1) E3 ubiquitin-protein ligase complexes that contain CUL3 and SPOP, plus a target protein.

It is found in the nucleus. It localises to the nucleus speckle. Its pathway is protein modification; protein ubiquitination. In terms of biological role, component of a cullin-RING-based BCR (BTB-CUL3-RBX1) E3 ubiquitin-protein ligase complex that mediates the ubiquitination of target proteins, leading most often to their proteasomal degradation. In Danio rerio (Zebrafish), this protein is Speckle-type POZ protein (spop).